The following is a 186-amino-acid chain: Probable nicotinate-nucleotide adenylyltransferase (186 aa).

Belongs to the NadD family.

The enzyme catalyses nicotinate beta-D-ribonucleotide + ATP + H(+) = deamido-NAD(+) + diphosphate. It functions in the pathway cofactor biosynthesis; NAD(+) biosynthesis; deamido-NAD(+) from nicotinate D-ribonucleotide: step 1/1. Catalyzes the reversible adenylation of nicotinate mononucleotide (NaMN) to nicotinic acid adenine dinucleotide (NaAD). This Thermus thermophilus (strain ATCC BAA-163 / DSM 7039 / HB27) protein is Probable nicotinate-nucleotide adenylyltransferase.